Reading from the N-terminus, the 230-residue chain is uncharacterized protein (230 aa).

A disordered region spans residues 118–195 (LLDEILPKEP…SKREMERLER (78 aa)). Positions 136 to 146 (QKKKEKRAALK) are enriched in basic residues. Basic and acidic residues-rich tracts occupy residues 160–170 (ETDLYGDRDSF) and 179–195 (QRSEFRASKREMERLER).

This is an uncharacterized protein from Schizosaccharomyces pombe (strain 972 / ATCC 24843) (Fission yeast).